The primary structure comprises 453 residues: Signal recognition particle protein (453 aa).

GTP-binding positions include 107 to 114 (GLQGAGKT), 190 to 194 (DTAGR), and 248 to 251 (TKVD).

Belongs to the GTP-binding SRP family. SRP54 subfamily. Part of the signal recognition particle protein translocation system, which is composed of SRP and FtsY. SRP is a ribonucleoprotein composed of Ffh and a 4.5S RNA molecule.

The protein localises to the cytoplasm. The catalysed reaction is GTP + H2O = GDP + phosphate + H(+). In terms of biological role, involved in targeting and insertion of nascent membrane proteins into the cytoplasmic membrane. Binds to the hydrophobic signal sequence of the ribosome-nascent chain (RNC) as it emerges from the ribosomes. The SRP-RNC complex is then targeted to the cytoplasmic membrane where it interacts with the SRP receptor FtsY. Interaction with FtsY leads to the transfer of the RNC complex to the Sec translocase for insertion into the membrane, the hydrolysis of GTP by both Ffh and FtsY, and the dissociation of the SRP-FtsY complex into the individual components. The sequence is that of Signal recognition particle protein from Escherichia coli O157:H7.